We begin with the raw amino-acid sequence, 394 residues long: Glycogen synthase kinase 1 (394 aa).

A Protein kinase domain is found at 35–318 (YTQCKIVGNG…AIDAMVHPFF (284 aa)). ATP is bound by residues 41-49 (VGNGSFGVV) and Lys-64.

It belongs to the protein kinase superfamily. CMGC Ser/Thr protein kinase family. GSK-3 subfamily.

Its subcellular location is the cytoplasm. The catalysed reaction is L-seryl-[protein] + ATP = O-phospho-L-seryl-[protein] + ADP + H(+). In terms of biological role, protein kinase that acts downstream of the MPS1 MAPK cascade as a highly conservative signal modulator that dictates growth, conidiation and pathogenicity. Phosphorylates HAT1 at 'Ser-8' to block its translocation from the nucleus to the cytoplasm where HAT1 positively regulates appressorium development and pathogenicity. This chain is Glycogen synthase kinase 1, found in Pyricularia oryzae (Rice blast fungus).